The primary structure comprises 646 residues: MSGNDEEFNDEFLLAIDSIETTLKKADMYRPLPPPYLPTFLPAPPPSTKISSSLSHPMQLQSSAGQQRKQIQVPDPFLSYSPPRELSQRVVSGFNDALMDYSNSTVVTAAKPISPTTSNRRCDSEKDLEIDRLKKELERVSKQLLDVEQECSQLKKGKSKETESRNLCADDNRGQCSTVHASKRIDLEPDVATSSVNHRENDSRMALDDKRSFKTTGVQADVANHSDLSKKLLDIWRTSNYQDPRKNLISELLLACSTDLQILFSFMKISTPPQELNKQEAKTSSDRQSSKALESEKVYQLYSAVTKISYGFVNLKTLVEPLLDLCKAETAVLVHRSLRVLHVLLEHICGDEKRFEASWDANWHSLFKLMNQIASKRTEQDVKQEALSIMNIIVMSTDAYTARESFVSKEVFESISLLLRKEGGLHVRKEAIHLFYLLLNCPKLYDTFDSLHEEKNSSDTENDSEGNFFALEAFGKIFEGLADCLTSPRKTSEDLELCRNVIMILALAASSGNSGYELLSSHKLPQDSSFLMLILHLLVAEIDSESTEFHPKAEIFKARTLLMREILILLNRLVSGLSSSATILKELTTSRDMASLTVDAATRLSRKRNLLGKPESSVERMRNTEIMDLARIFKKRVFAFLGDNTI.

The segment at 42 to 70 is disordered; sequence PAPPPSTKISSSLSHPMQLQSSAGQQRKQ. Residues 48-70 are compositionally biased toward polar residues; it reads TKISSSLSHPMQLQSSAGQQRKQ. The short motif at 119-126 is the Nuclear localization signal element; it reads NRRCDSEK. Residues 123–157 adopt a coiled-coil conformation; sequence DSEKDLEIDRLKKELERVSKQLLDVEQECSQLKKG. One can recognise a Phosphatase tensin-type domain in the interval 376–646; it reads KRTEQDVKQE…VFAFLGDNTI (271 aa).

The protein belongs to the serpin family. In terms of assembly, forms multimers through the coiled-coil domain. Post-translationally, probably phosphorylated by ATR. As to expression, accumulates throughout the root tip.

Its subcellular location is the nucleus. The protein resides in the cytoplasm. Required for tolerance to DNA-damaging and cross-linking agents such as UVB irradiation, gamma-radiation, aphidicolin, ionizing radiation and hydroxyurea (HU), cisplatin (CDDP) and mitomycin C (MMC). Involved in cell-cycle G2/M arrest in response to DNA damage. Required for aluminum-dependent gene regulation and root growth inhibition in an ATR-dependent manner by halting cell cycle progression and triggering loss of the quiescent center (QC). This is Protein SENSITIVE TO UV 2 from Arabidopsis thaliana (Mouse-ear cress).